The primary structure comprises 402 residues: Tyrosine--tRNA ligase (402 aa).

The 'HIGH' region signature appears at 47–56 (PTAPDLHLGH). A 'KMSKS' region motif is present at residues 232–236 (KMSKS). Lysine 235 is an ATP binding site. Residues 341-401 (VGVLDVLKQI…GKKRFMKLNI (61 aa)) form the S4 RNA-binding domain.

The protein belongs to the class-I aminoacyl-tRNA synthetase family. TyrS type 2 subfamily. As to quaternary structure, homodimer.

The protein localises to the cytoplasm. It catalyses the reaction tRNA(Tyr) + L-tyrosine + ATP = L-tyrosyl-tRNA(Tyr) + AMP + diphosphate + H(+). Catalyzes the attachment of tyrosine to tRNA(Tyr) in a two-step reaction: tyrosine is first activated by ATP to form Tyr-AMP and then transferred to the acceptor end of tRNA(Tyr). In Helicobacter pylori (strain J99 / ATCC 700824) (Campylobacter pylori J99), this protein is Tyrosine--tRNA ligase.